Consider the following 470-residue polypeptide: Meiosis-specific with OB domain-containing protein (470 aa).

A DNA-binding region (OB) is located at residues 167–272 (IINVLAAVRS…EANILLNFIR (106 aa)).

The protein belongs to the MEIOB family. As to quaternary structure, component of a multiprotein complex with RPA2 and SPATA22. Interacts with SPATA22. Interacts with the complex BRME1:HSF2BP:BRCA2.

It is found in the cytoplasm. It localises to the nucleus. The protein localises to the chromosome. Single-stranded DNA-binding protein required for homologous recombination in meiosis I. Required for double strand breaks (DSBs) repair and crossover formation and promotion of faithful and complete synapsis. Not required for the initial loading of recombinases but required to maintain a proper number of RAD51 and DMC1 foci after the zygotene stage. May act by ensuring the stabilization of recombinases, which is required for successful homology search and meiotic recombination. Displays Single-stranded DNA 3'-5' exonuclease activity in vitro. The sequence is that of Meiosis-specific with OB domain-containing protein from Rattus norvegicus (Rat).